The primary structure comprises 226 residues: Probable chemoreceptor glutamine deamidase CheD (226 aa).

A disordered region spans residues Pro-207–Ala-226.

It belongs to the CheD family.

It catalyses the reaction L-glutaminyl-[protein] + H2O = L-glutamyl-[protein] + NH4(+). Probably deamidates glutamine residues to glutamate on methyl-accepting chemotaxis receptors (MCPs), playing an important role in chemotaxis. The polypeptide is Probable chemoreceptor glutamine deamidase CheD (Bordetella bronchiseptica (strain ATCC BAA-588 / NCTC 13252 / RB50) (Alcaligenes bronchisepticus)).